The primary structure comprises 338 residues: Probable 1-aminocyclopropane-1-carboxylate deaminase (338 aa).

Lysine 51 is subject to N6-(pyridoxal phosphate)lysine. The Nucleophile role is filled by serine 78.

Belongs to the ACC deaminase/D-cysteine desulfhydrase family. It depends on pyridoxal 5'-phosphate as a cofactor.

The enzyme catalyses 1-aminocyclopropane-1-carboxylate + H2O = 2-oxobutanoate + NH4(+). Catalyzes a cyclopropane ring-opening reaction, the irreversible conversion of 1-aminocyclopropane-1-carboxylate (ACC) to ammonia and alpha-ketobutyrate. In Schizosaccharomyces pombe (strain 972 / ATCC 24843) (Fission yeast), this protein is Probable 1-aminocyclopropane-1-carboxylate deaminase.